Consider the following 114-residue polypeptide: Iron-sulfur cluster insertion protein ErpA (114 aa).

Residues Cys42, Cys106, and Cys108 each contribute to the iron-sulfur cluster site.

It belongs to the HesB/IscA family. In terms of assembly, homodimer. Iron-sulfur cluster serves as cofactor.

Functionally, required for insertion of 4Fe-4S clusters for at least IspG. This Haemophilus influenzae (strain PittGG) protein is Iron-sulfur cluster insertion protein ErpA.